A 129-amino-acid polypeptide reads, in one-letter code: Small ribosomal subunit protein uS11 (129 aa).

Belongs to the universal ribosomal protein uS11 family. Part of the 30S ribosomal subunit. Interacts with proteins S7 and S18. Binds to IF-3.

Functionally, located on the platform of the 30S subunit, it bridges several disparate RNA helices of the 16S rRNA. Forms part of the Shine-Dalgarno cleft in the 70S ribosome. This is Small ribosomal subunit protein uS11 from Symbiobacterium thermophilum (strain DSM 24528 / JCM 14929 / IAM 14863 / T).